The sequence spans 653 residues: J protein JJJ2 (653 aa).

In terms of domain architecture, J spans 14–78; the sequence is TLYSVLNLKY…KEKMKYDSKL (65 aa). Disordered regions lie at residues 85–308 and 490–512; these read DYSP…SSTE and VSPK…EENL. 2 stretches are compositionally biased toward polar residues: residues 161-171 and 187-200; these read NAKSYQNSKKS and ATSF…SSSV. Residues 213–241 show a composition bias toward low complexity; the sequence is SGSAVGSESRISSSGSESSSNVNSATGSS. A compositionally biased stretch (polar residues) spans 298–308; the sequence is PVKTTPNSSTE.

It localises to the cytoplasm. Its subcellular location is the nucleus. This is J protein JJJ2 (JJJ2) from Kluyveromyces lactis (strain ATCC 8585 / CBS 2359 / DSM 70799 / NBRC 1267 / NRRL Y-1140 / WM37) (Yeast).